The sequence spans 613 residues: Dihydroxy-acid dehydratase 3 (613 aa).

Residue D81 coordinates Mg(2+). C122 serves as a coordination point for [2Fe-2S] cluster. 2 residues coordinate Mg(2+): D123 and K124. An N6-carboxylysine modification is found at K124. C197 provides a ligand contact to [2Fe-2S] cluster. E493 serves as a coordination point for Mg(2+). S519 serves as the catalytic Proton acceptor.

The protein belongs to the IlvD/Edd family. In terms of assembly, homodimer. [2Fe-2S] cluster is required as a cofactor. Mg(2+) serves as cofactor.

It catalyses the reaction (2R)-2,3-dihydroxy-3-methylbutanoate = 3-methyl-2-oxobutanoate + H2O. The enzyme catalyses (2R,3R)-2,3-dihydroxy-3-methylpentanoate = (S)-3-methyl-2-oxopentanoate + H2O. Its pathway is amino-acid biosynthesis; L-isoleucine biosynthesis; L-isoleucine from 2-oxobutanoate: step 3/4. It participates in amino-acid biosynthesis; L-valine biosynthesis; L-valine from pyruvate: step 3/4. In terms of biological role, functions in the biosynthesis of branched-chain amino acids. Catalyzes the dehydration of (2R,3R)-2,3-dihydroxy-3-methylpentanoate (2,3-dihydroxy-3-methylvalerate) into 2-oxo-3-methylpentanoate (2-oxo-3-methylvalerate) and of (2R)-2,3-dihydroxy-3-methylbutanoate (2,3-dihydroxyisovalerate) into 2-oxo-3-methylbutanoate (2-oxoisovalerate), the penultimate precursor to L-isoleucine and L-valine, respectively. In Nocardia farcinica (strain IFM 10152), this protein is Dihydroxy-acid dehydratase 3.